Consider the following 109-residue polypeptide: Protein reprimo (109 aa).

2 N-linked (GlcNAc...) asparagine glycosylation sites follow: Asn-7 and Asn-18. The helical transmembrane segment at 56–76 threads the bilayer; the sequence is VVQIAVMCVLSLTVVFGIFFL. A Phosphoserine modification is found at Ser-98.

This sequence belongs to the reprimo family.

It localises to the cytoplasm. Its subcellular location is the membrane. Its function is as follows. May be involved in the regulation of p53-dependent G2 arrest of the cell cycle. Seems to induce cell cycle arrest by inhibiting CDK1 activity and nuclear translocation of the CDC2 cyclin B1 complex. The chain is Protein reprimo (Rprm) from Mus musculus (Mouse).